Consider the following 258-residue polypeptide: Type III pantothenate kinase 1 (258 aa).

6-13 (DMGNSHIH) is a binding site for ATP. Position 107 to 110 (107 to 110 (GADR)) interacts with substrate. Asp109 (proton acceptor) is an active-site residue. Asp130 serves as a coordination point for K(+). Thr133 lines the ATP pocket. Thr185 contacts substrate.

This sequence belongs to the type III pantothenate kinase family. As to quaternary structure, homodimer. Requires NH4(+) as cofactor. The cofactor is K(+).

The protein resides in the cytoplasm. The enzyme catalyses (R)-pantothenate + ATP = (R)-4'-phosphopantothenate + ADP + H(+). It functions in the pathway cofactor biosynthesis; coenzyme A biosynthesis; CoA from (R)-pantothenate: step 1/5. In terms of biological role, catalyzes the phosphorylation of pantothenate (Pan), the first step in CoA biosynthesis. This chain is Type III pantothenate kinase 1, found in Francisella tularensis subsp. tularensis (strain FSC 198).